The primary structure comprises 146 residues: Hemoglobin subunit beta (146 aa).

Val1 carries the N-acetylvaline modification. Positions 2 to 146 (HLTPEEKNAV…VANALAHKYH (145 aa)) constitute a Globin domain. Thr12 is modified (phosphothreonine). Phosphoserine is present on Ser44. Position 59 is an N6-acetyllysine (Lys59). A heme b-binding site is contributed by His63. Lys82 carries the post-translational modification N6-acetyllysine. His92 lines the heme b pocket. Cys93 is subject to S-nitrosocysteine. At Lys144 the chain carries N6-acetyllysine.

This sequence belongs to the globin family. Heterotetramer of two alpha chains and two beta chains. Red blood cells.

Functionally, involved in oxygen transport from the lung to the various peripheral tissues. This Theropithecus gelada (Gelada baboon) protein is Hemoglobin subunit beta (HBB).